A 1906-amino-acid polypeptide reads, in one-letter code: A disintegrin and metalloproteinase with thrombospondin motifs 20 (1906 aa).

The first 26 residues, 1 to 26, serve as a signal peptide directing secretion; sequence MRVAKWLTGLLCPISLLLTGSWEVRF. The propeptide occupies 27–249; that stretch reads HPRQEALVKT…RSQLHSRNKR (223 aa). N92 and N221 each carry an N-linked (GlcNAc...) asparagine glycan. Residues 201–222 form a disordered region; it reads PCEVSENQMEKTALPSQSSRNT. The region spanning 255-464 is the Peptidase M12B domain; that stretch reads RYVEVMVTAD…GHGECLLDKP (210 aa). 11 disulfides stabilise this stretch: C330–C383, C359–C365, C377–C459, C415–C443, C486–C508, C497–C518, C503–C537, C531–C542, C565–C602, C569–C607, and C580–C592. H399 contacts Zn(2+). The active site involves E400. Zn(2+)-binding residues include H403 and H409. The 88-residue stretch at 465–552 folds into the Disintegrin domain; the sequence is NGRTYDLSPQ…VTRDMETRPV (88 aa). The 56-residue stretch at 553-608 folds into the TSP type-1 1 domain; the sequence is DGEWGPWGPYSSCSRTCGGGIKSTARLCDRPEPRNGGRYCVGRRMKFRSCNTDSCP. 3 N-linked (GlcNAc...) asparagine glycosylation sites follow: N714, N798, and N805. Positions 721–842 are spacer; it reads AGVFNSAHYG…FNIPIEERSN (122 aa). 7 consecutive TSP type-1 domains span residues 843–901, 906–962, 962–1015, 1017–1074, 1075–1131, 1148–1202, and 1203–1260; these read LFSW…MDCE, IIGK…GSCV, VLTR…NCNE, PCPS…RACA, SWHV…APCL, RAAQ…LCFS, and PCGE…AACP. N1057 is a glycosylation site (N-linked (GlcNAc...) asparagine). Positions 1265–1295 are disordered; that stretch reads RAPSSSEQPSHVPSRNVPLTHKPGENQDQGA. Polar residues predominate over residues 1266 to 1277; it reads APSSSEQPSHVP. TSP type-1 domains are found at residues 1300-1351, 1354-1411, 1412-1465, 1468-1526, 1527-1584, 1585-1648, and 1650-1706; these read RGNQ…RHCG, PCPH…HACP, EDVS…KACR, RCPS…QDCM, RYQW…PHCK, YSVV…LRSC, and HVAT…NDCK. N-linked (GlcNAc...) asparagine glycosylation occurs at N1562. The 200-residue stretch at 1707 to 1906 folds into the GON domain; that stretch reads LLTTCKELQV…MATGLSIQVL (200 aa). N1719, N1759, and N1777 each carry an N-linked (GlcNAc...) asparagine glycan.

Requires Zn(2+) as cofactor. The precursor is cleaved by a furin endopeptidase. Post-translationally, glycosylated. Can be O-fucosylated by POFUT2 on a serine or a threonine residue found within the consensus sequence C1-X(2)-(S/T)-C2-G of the TSP type-1 repeat domains where C1 and C2 are the first and second cysteine residue of the repeat, respectively. Fucosylated repeats can then be further glycosylated by the addition of a beta-1,3-glucose residue by the glucosyltransferase, B3GALTL. Fucosylation mediates the efficient secretion of ADAMTS family members. Can also be C-glycosylated with one or two mannose molecules on tryptophan residues within the consensus sequence W-X-X-W of the TPRs, and N-glycosylated. These other glycosylations can also facilitate secretion. In terms of tissue distribution, expressed at low level in testis and brain.

The protein resides in the secreted. Its subcellular location is the extracellular space. The protein localises to the extracellular matrix. In terms of biological role, may play a role in tissue-remodeling process occurring in both normal and pathological conditions. May have a protease-independent function in the transport from the endoplasmic reticulum to the Golgi apparatus of secretory cargos, mediated by the GON domain. This chain is A disintegrin and metalloproteinase with thrombospondin motifs 20 (Adamts20), found in Mus musculus (Mouse).